The chain runs to 338 residues: Pseudouridylate synthase TRUB1 (338 aa).

At Ala2 the chain carries N-acetylalanine. Asp109 serves as the catalytic Nucleophile.

The protein belongs to the pseudouridine synthase TruB family.

It is found in the nucleus. The protein resides in the cytoplasm. Its subcellular location is the cytosol. It carries out the reaction a uridine in mRNA = a pseudouridine in mRNA. The catalysed reaction is a uridine in tRNA = a pseudouridine in tRNA. The enzyme catalyses uridine(55) in tRNA = pseudouridine(55) in tRNA. Its function is as follows. Pseudouridine synthase that catalyzes pseudouridylation of mRNAs and tRNAs. Mediates pseudouridylation of mRNAs with the consensus sequence 5'-GUUCNANNC-3', harboring a stem-loop structure. Constitutes the major pseudouridine synthase acting on mRNAs. Also catalyzes pseudouridylation of some tRNAs, including synthesis of pseudouridine(55) from uracil-55, in the psi GC loop of a subset of tRNAs. Promotes the processing of pri-let-7 microRNAs (pri-miRNAs) independently of its RNA pseudouridylate synthase activity. Acts by binding to the stem-loop structure on pri-let-7, preventing LIN28-binding (LIN28A and/or LIN28B), thereby enhancing the interaction between pri-let-7 and the microprocessor DGCR8, which mediates miRNA maturation. The protein is Pseudouridylate synthase TRUB1 of Mus musculus (Mouse).